A 112-amino-acid polypeptide reads, in one-letter code: cAMP-regulated phosphoprotein 19 (112 aa).

Positions 1–11 are enriched in low complexity; it reads MSAESPEPASA. The tract at residues 1–48 is disordered; the sequence is MSAESPEPASAEEQKEMEDKVISPEKAEEAKLKARYPHLGQKPGGSDF. An N-acetylserine modification is found at serine 2. Over residues 12-32 the composition is skewed to basic and acidic residues; the sequence is EEQKEMEDKVISPEKAEEAKL. Phosphoserine; by GWL is present on residues serine 62 and serine 104. The tract at residues 73–112 is disordered; the sequence is KNKQLPTAAPDKTEVTGDHIPTPQDLPQRKPSLVASKLAG. Phosphoserine; by PKA is present on serine 104.

Belongs to the endosulfine family. In terms of assembly, interacts (when phosphorylated at Ser-62) with PPP2R2D. In terms of processing, phosphorylation at Ser-62 by MASTL/GWL during mitosis is essential for interaction with PPP2R2D (PR55-delta) and subsequent inactivation of PP2A.

It localises to the cytoplasm. Its function is as follows. Protein phosphatase inhibitor that specifically inhibits protein phosphatase 2A (PP2A) during mitosis. Inhibition of PP2A is enhanced when ARPP19 is phosphorylated. When phosphorylated at Ser-62 during mitosis, specifically interacts with PPP2R2D (PR55-delta) and inhibits its activity, leading to inactivation of PP2A, an essential condition to keep cyclin-B1-CDK1 activity high during M phase. In Gallus gallus (Chicken), this protein is cAMP-regulated phosphoprotein 19 (ARPP19).